The primary structure comprises 486 residues: MAIAEWRQQLKLGEVSARELIDHQLARIAVVDPTLHAFLDVTAERARADADRIDEALAAGESLPPLAGVPLAIKDNLCTKGIRTTCSSRMLETFVPPYESTVTERLWQAGAVLLGKTNLDEFAMGSSTETSAFGATSNPWDISRVPGGSSGGSAAAVAAGECMAALGSDTGGSIRQPASFCGVVGLKPTYGRVSRWGLVAFASSLDQVGPFTTNVADAAELLQVIAGSDPRDSTCLNVAVPDYCSALSQPMSGVRIGLIRECFDQNGLDAQVKSTVLEAAEKLQSLGAELVEVSCPRFSDGIATYYVIAPSEASANLARYDGVKYGYRAEGADALAAMTARSRAEGFGSEVQRRILIGTYALSAGYMDAYYKKAQQVRTLIRQDFDAAFQTVDVLLTPTSPTTAFQVGAHADDPLAMYLADLLTIPANLAGLPAISLPCGFDDDGLPIGVQLIANVLEESRLLQVAFHYEQSANVMTNHPQGNFIP.

Catalysis depends on charge relay system residues Lys74 and Ser149. The active-site Acyl-ester intermediate is the Ser173.

Belongs to the amidase family. GatA subfamily. As to quaternary structure, heterotrimer of A, B and C subunits.

It carries out the reaction L-glutamyl-tRNA(Gln) + L-glutamine + ATP + H2O = L-glutaminyl-tRNA(Gln) + L-glutamate + ADP + phosphate + H(+). Allows the formation of correctly charged Gln-tRNA(Gln) through the transamidation of misacylated Glu-tRNA(Gln) in organisms which lack glutaminyl-tRNA synthetase. The reaction takes place in the presence of glutamine and ATP through an activated gamma-phospho-Glu-tRNA(Gln). The polypeptide is Glutamyl-tRNA(Gln) amidotransferase subunit A (Prochlorococcus marinus (strain MIT 9303)).